The sequence spans 485 residues: N-succinylglutamate 5-semialdehyde dehydrogenase (485 aa).

220-225 (GSANTG) is a binding site for NAD(+). Active-site residues include glutamate 243 and cysteine 278.

Belongs to the aldehyde dehydrogenase family. AstD subfamily.

The catalysed reaction is N-succinyl-L-glutamate 5-semialdehyde + NAD(+) + H2O = N-succinyl-L-glutamate + NADH + 2 H(+). It participates in amino-acid degradation; L-arginine degradation via AST pathway; L-glutamate and succinate from L-arginine: step 4/5. In terms of biological role, catalyzes the NAD-dependent reduction of succinylglutamate semialdehyde into succinylglutamate. In Vibrio parahaemolyticus serotype O3:K6 (strain RIMD 2210633), this protein is N-succinylglutamate 5-semialdehyde dehydrogenase.